A 90-amino-acid chain; its full sequence is Co-chaperonin GroES (90 aa).

It belongs to the GroES chaperonin family. As to quaternary structure, heptamer of 7 subunits arranged in a ring. Interacts with the chaperonin GroEL.

It is found in the cytoplasm. Functionally, together with the chaperonin GroEL, plays an essential role in assisting protein folding. The GroEL-GroES system forms a nano-cage that allows encapsulation of the non-native substrate proteins and provides a physical environment optimized to promote and accelerate protein folding. GroES binds to the apical surface of the GroEL ring, thereby capping the opening of the GroEL channel. The protein is Co-chaperonin GroES of Thermosipho africanus (strain TCF52B).